Here is a 225-residue protein sequence, read N- to C-terminus: Deoxyribose-phosphate aldolase (225 aa).

The Proton donor/acceptor role is filled by D96. Residue K157 is the Schiff-base intermediate with acetaldehyde of the active site. K185 acts as the Proton donor/acceptor in catalysis.

Belongs to the DeoC/FbaB aldolase family. DeoC type 1 subfamily.

The protein resides in the cytoplasm. It carries out the reaction 2-deoxy-D-ribose 5-phosphate = D-glyceraldehyde 3-phosphate + acetaldehyde. It functions in the pathway carbohydrate degradation; 2-deoxy-D-ribose 1-phosphate degradation; D-glyceraldehyde 3-phosphate and acetaldehyde from 2-deoxy-alpha-D-ribose 1-phosphate: step 2/2. In terms of biological role, catalyzes a reversible aldol reaction between acetaldehyde and D-glyceraldehyde 3-phosphate to generate 2-deoxy-D-ribose 5-phosphate. The sequence is that of Deoxyribose-phosphate aldolase from Microcystis aeruginosa (strain NIES-843 / IAM M-2473).